Consider the following 650-residue polypeptide: Acetyl-coenzyme A synthetase (650 aa).

CoA contacts are provided by residues 191 to 194, Thr311, and Asn335; that span reads RGGR. ATP is bound by residues 387–389, 411–416, Asp501, and Arg516; these read GEP and DTWWQT. A CoA-binding site is contributed by Ser524. Arg527 contacts ATP. 3 residues coordinate Mg(2+): Val538, His540, and Ile543. Arg585 lines the CoA pocket. Lys610 carries the post-translational modification N6-acetyllysine.

It belongs to the ATP-dependent AMP-binding enzyme family. Requires Mg(2+) as cofactor. Post-translationally, acetylated. Deacetylation by the SIR2-homolog deacetylase activates the enzyme.

It catalyses the reaction acetate + ATP + CoA = acetyl-CoA + AMP + diphosphate. Functionally, catalyzes the conversion of acetate into acetyl-CoA (AcCoA), an essential intermediate at the junction of anabolic and catabolic pathways. AcsA undergoes a two-step reaction. In the first half reaction, AcsA combines acetate with ATP to form acetyl-adenylate (AcAMP) intermediate. In the second half reaction, it can then transfer the acetyl group from AcAMP to the sulfhydryl group of CoA, forming the product AcCoA. In Vibrio vulnificus (strain YJ016), this protein is Acetyl-coenzyme A synthetase.